A 184-amino-acid polypeptide reads, in one-letter code: Photosystem I assembly protein Ycf4 (184 aa).

A run of 2 helical transmembrane segments spans residues 22–42 and 57–77; these read FCWA…GISS and IIFF…LFIS.

Belongs to the Ycf4 family.

It is found in the plastid. The protein localises to the chloroplast thylakoid membrane. Seems to be required for the assembly of the photosystem I complex. The polypeptide is Photosystem I assembly protein Ycf4 (Ipomoea purpurea (Common morning glory)).